Reading from the N-terminus, the 258-residue chain is MSSQPFTNKVIALTGSASGIGLETAKLLASRGARLSLADIQEDKLKELQAQLESEYYVDVITTKVDVRKFGEVEAWINKTIDNFGKLDGSANLAGVAPESIGLKGIVEQDLDEWEFVLGVNLTGTMNSLKAQLKVMANNGSIVNASSIRGLTGAAKNASYSSAKHGIIGLTRTAAKEVGGKGIRVNAICPGRISTPMLKTAENSIGLHLQPGSANYPPIALGRDGEAKEVAQLVAFLLSDESTYISGADISIDGGWRC.

Positions 20, 66, and 130 each coordinate NADP(+). Active-site proton donor residues include S146 and Y160. Positions 160, 164, 193, and 195 each coordinate NADP(+). The Lowers pKa of active site Tyr role is filled by K164.

This sequence belongs to the short-chain dehydrogenases/reductases (SDR) family.

The protein operates within hormone biosynthesis. Short-chain dehydrogenase/reductase; part of the gene cluster that mediates the biosynthesis of abscisic acid (ABA), a phytohormone that acts antagonistically toward salicylic acid (SA), jasmonic acid (JA) and ethylene (ETH) signaling, to impede plant defense responses. The first step of the pathway catalyzes the reaction from farnesyl diphosphate to alpha-ionylideneethane performed by the alpha-ionylideneethane synthase aba3 via a three-step reaction mechanism involving 2 neutral intermediates, beta-farnesene and allofarnesene. The cytochrome P450 monooxygenase aba1 might then be involved in the conversion of alpha-ionylideneethane to alpha-ionylideneacetic acid. Alpha-ionylideneacetic acid is further converted to abscisic acid in 2 steps involving the cytochrome P450 monooxygenase aba2 and the short-chain dehydrogenase/reductase aba4, via the intermediates 1'-deoxy-ABA or 1',4'-trans-diol-ABA, depending on the order of action of these 2 enzymes. Aba2 is responsible for the hydroxylation of carbon atom C-1' and aba4 might be involved in the oxidation of the C-4' carbon atom. This chain is Short-chain dehydrogenase/reductase aba4, found in Botryotinia fuckeliana (strain B05.10) (Noble rot fungus).